Reading from the N-terminus, the 400-residue chain is Subtilisin-like protease 7 (400 aa).

Residues 1-20 (MGFITKAIPLALAAMSVVNG) form the signal peptide. A propeptide spanning residues 21–119 (AEILETRAGV…IERDARVQIN (99 aa)) is cleaved from the precursor. Residues 36–118 (KYIVIMNDGV…YIERDARVQI (83 aa)) enclose the Inhibitor I9 domain. Residues 129–400 (SWGLARVGSR…GKLINNGSGK (272 aa)) form the Peptidase S8 domain. Residues D161 and H192 each act as charge relay system in the active site. N-linked (GlcNAc...) asparagine glycosylation is found at N222 and N252. The active-site Charge relay system is the S346. The N-linked (GlcNAc...) asparagine glycan is linked to N396.

Belongs to the peptidase S8 family.

The protein resides in the secreted. Its function is as follows. Secreted subtilisin-like serine protease with keratinolytic activity that contributes to pathogenicity. The protein is Subtilisin-like protease 7 (SUB7) of Arthroderma otae (strain ATCC MYA-4605 / CBS 113480) (Microsporum canis).